Consider the following 179-residue polypeptide: MNRLKEKYLKEVVPALMSKFNYKSVMQVPKIEKIVINMGVGDAVQNAKALDNAVEELALISGQKPVVTRAKKSIAGFRLREGMPIGAKVTLRGERMYEFFDKLVSVSLPRVRDFRGVSKKSFDGRGNYTLGVKEQLIFPEIDYDKVNKVRGMDIVIVTTAKTDEEARELLTLLGMPFQK.

It belongs to the universal ribosomal protein uL5 family. In terms of assembly, part of the 50S ribosomal subunit; part of the 5S rRNA/L5/L18/L25 subcomplex. Contacts the 5S rRNA and the P site tRNA. Forms a bridge to the 30S subunit in the 70S ribosome.

Its function is as follows. This is one of the proteins that bind and probably mediate the attachment of the 5S RNA into the large ribosomal subunit, where it forms part of the central protuberance. In the 70S ribosome it contacts protein S13 of the 30S subunit (bridge B1b), connecting the 2 subunits; this bridge is implicated in subunit movement. Contacts the P site tRNA; the 5S rRNA and some of its associated proteins might help stabilize positioning of ribosome-bound tRNAs. The polypeptide is Large ribosomal subunit protein uL5 (Anoxybacillus flavithermus (strain DSM 21510 / WK1)).